An 80-amino-acid polypeptide reads, in one-letter code: uncharacterized protein (80 aa).

The signal sequence occupies residues 1–15 (MEVIVVIVVIVVVIA). Residues 23–44 (NSNSNSNNSSDSSNESNNSDSS) are compositionally biased toward low complexity. The interval 23 to 52 (NSNSNSNNSSDSSNESNNSDSSKNGGSDIY) is disordered. N-linked (GlcNAc...) asparagine glycans are attached at residues asparagine 29, asparagine 30, asparagine 36, asparagine 39, and asparagine 64.

Its subcellular location is the secreted. This is an uncharacterized protein from Dictyostelium discoideum (Social amoeba).